The chain runs to 118 residues: Non-specific lipid-transfer protein 2 (118 aa).

The first 25 residues, Met1 to Ala25, serve as a signal peptide directing secretion. 4 disulfide bridges follow: Cys29–Cys76, Cys39–Cys53, Cys54–Cys100, and Cys74–Cys114.

This sequence belongs to the plant LTP family.

Its function is as follows. Plant non-specific lipid-transfer proteins transfer phospholipids as well as galactolipids across membranes. May play a role in wax or cutin deposition in the cell walls of expanding epidermal cells and certain secretory tissues. The sequence is that of Non-specific lipid-transfer protein 2 (LTP2) from Arabidopsis thaliana (Mouse-ear cress).